We begin with the raw amino-acid sequence, 1160 residues long: Protein translocase subunit SecA (1160 aa).

Residues Gln-162 and 180–184 each bind ATP; that span reads GEGKT. The disordered stretch occupies residues 342–362; it reads LLEEKEEAEEEGDSRRAQELE. Acidic residues predominate over residues 344–353; sequence EEKEEAEEEG. Asp-726 provides a ligand contact to ATP. Positions 1060 to 1134 are disordered; sequence EVQTEGQGPR…RNEYVTVRNN (75 aa). The span at 1074–1083 shows a compositional bias: polar residues; that stretch reads QRNAQTQHDS. Residues 1104–1115 are compositionally biased toward basic and acidic residues; it reads AAERDPTVEEKQ.

It belongs to the SecA family. In terms of assembly, monomer and homodimer. Part of the essential Sec protein translocation apparatus which comprises SecA, SecYEG and auxiliary proteins SecDF. Other proteins may also be involved.

It is found in the cell inner membrane. Its subcellular location is the cytoplasm. It catalyses the reaction ATP + H2O + cellular proteinSide 1 = ADP + phosphate + cellular proteinSide 2.. In terms of biological role, part of the Sec protein translocase complex. Interacts with the SecYEG preprotein conducting channel. Has a central role in coupling the hydrolysis of ATP to the transfer of proteins into and across the cell membrane, serving as an ATP-driven molecular motor driving the stepwise translocation of polypeptide chains across the membrane. In Salinibacter ruber (strain DSM 13855 / M31), this protein is Protein translocase subunit SecA.